Reading from the N-terminus, the 95-residue chain is Integration host factor subunit beta (95 aa).

The disordered stretch occupies residues 56-76 (RAPRTGRNPKTGTSVDLDGKY).

The protein belongs to the bacterial histone-like protein family. As to quaternary structure, heterodimer of an alpha and a beta chain.

Functionally, this protein is one of the two subunits of integration host factor, a specific DNA-binding protein that functions in genetic recombination as well as in transcriptional and translational control. This is Integration host factor subunit beta from Shewanella sediminis (strain HAW-EB3).